Consider the following 170-residue polypeptide: ATP synthase subunit b (170 aa).

The chain crosses the membrane as a helical span at residues 22–41 (VLNWAVVVFGLYKFLPGFLG).

Belongs to the ATPase B chain family. As to quaternary structure, F-type ATPases have 2 components, F(1) - the catalytic core - and F(0) - the membrane proton channel. F(1) has five subunits: alpha(3), beta(3), gamma(1), delta(1), epsilon(1). F(0) has four main subunits: a(1), b(1), b'(1) and c(10-14). The alpha and beta chains form an alternating ring which encloses part of the gamma chain. F(1) is attached to F(0) by a central stalk formed by the gamma and epsilon chains, while a peripheral stalk is formed by the delta, b and b' chains.

It is found in the cellular thylakoid membrane. Its function is as follows. F(1)F(0) ATP synthase produces ATP from ADP in the presence of a proton or sodium gradient. F-type ATPases consist of two structural domains, F(1) containing the extramembraneous catalytic core and F(0) containing the membrane proton channel, linked together by a central stalk and a peripheral stalk. During catalysis, ATP synthesis in the catalytic domain of F(1) is coupled via a rotary mechanism of the central stalk subunits to proton translocation. In terms of biological role, component of the F(0) channel, it forms part of the peripheral stalk, linking F(1) to F(0). The polypeptide is ATP synthase subunit b (Prochlorococcus marinus subsp. pastoris (strain CCMP1986 / NIES-2087 / MED4)).